The chain runs to 210 residues: Na(+)-translocating NADH-quinone reductase subunit D (210 aa).

Helical transmembrane passes span alanine 9–cysteine 29, leucine 42–isoleucine 62, isoleucine 72–alanine 92, alanine 96–glycine 116, phenylalanine 131–isoleucine 151, and methionine 178–leucine 198.

Belongs to the NqrDE/RnfAE family. As to quaternary structure, composed of six subunits; NqrA, NqrB, NqrC, NqrD, NqrE and NqrF.

The protein resides in the cell inner membrane. It catalyses the reaction a ubiquinone + n Na(+)(in) + NADH + H(+) = a ubiquinol + n Na(+)(out) + NAD(+). Functionally, NQR complex catalyzes the reduction of ubiquinone-1 to ubiquinol by two successive reactions, coupled with the transport of Na(+) ions from the cytoplasm to the periplasm. NqrA to NqrE are probably involved in the second step, the conversion of ubisemiquinone to ubiquinol. The chain is Na(+)-translocating NADH-quinone reductase subunit D from Pseudoalteromonas translucida (strain TAC 125).